The following is a 108-amino-acid chain: Peptidyl-prolyl cis-trans isomerase FKBP1B (108 aa).

In terms of domain architecture, PPIase FKBP-type spans 20-108 (GQTCVVHYTG…IFGVELLNLE (89 aa)).

It belongs to the FKBP-type PPIase family. FKBP1 subfamily. In terms of assembly, identified in a complex composed of RYR2, FKBP1B, PKA catalytic subunit, PRKAR2A, AKAP6, and the protein phosphatases PP2A and PP1. Interacts directly with RYR2.

The protein resides in the cytoplasm. Its subcellular location is the sarcoplasmic reticulum. It catalyses the reaction [protein]-peptidylproline (omega=180) = [protein]-peptidylproline (omega=0). Inhibited by both FK506 and rapamycin. Has the potential to contribute to the immunosuppressive and toxic effects of FK506 and rapamycin. PPIases accelerate the folding of proteins. It catalyzes the cis-trans isomerization of proline imidic peptide bonds in oligopeptides. This chain is Peptidyl-prolyl cis-trans isomerase FKBP1B (FKBP1B), found in Oryctolagus cuniculus (Rabbit).